A 308-amino-acid polypeptide reads, in one-letter code: Serine/threonine-protein phosphatase PP1 (308 aa).

Positions 64, 66, 92, and 124 each coordinate Mn(2+). Residue His-125 is the Proton donor of the active site. 2 residues coordinate Mn(2+): His-173 and His-248.

It belongs to the PPP phosphatase family. PP-1 subfamily. It depends on Mn(2+) as a cofactor.

The protein resides in the cytoplasm. It catalyses the reaction O-phospho-L-seryl-[protein] + H2O = L-seryl-[protein] + phosphate. It carries out the reaction O-phospho-L-threonyl-[protein] + H2O = L-threonyl-[protein] + phosphate. The chain is Serine/threonine-protein phosphatase PP1 (pph-3) from Neurospora crassa (strain ATCC 24698 / 74-OR23-1A / CBS 708.71 / DSM 1257 / FGSC 987).